A 179-amino-acid chain; its full sequence is ATP synthase subunit b (179 aa).

Residues 26–46 (FLEANLFNLAILLGIIIYYAP) form a helical membrane-spanning segment.

This sequence belongs to the ATPase B chain family. As to quaternary structure, F-type ATPases have 2 components, F(1) - the catalytic core - and F(0) - the membrane proton channel. F(1) has five subunits: alpha(3), beta(3), gamma(1), delta(1), epsilon(1). F(0) has four main subunits: a(1), b(1), b'(1) and c(10-14). The alpha and beta chains form an alternating ring which encloses part of the gamma chain. F(1) is attached to F(0) by a central stalk formed by the gamma and epsilon chains, while a peripheral stalk is formed by the delta, b and b' chains.

Its subcellular location is the cellular thylakoid membrane. In terms of biological role, f(1)F(0) ATP synthase produces ATP from ADP in the presence of a proton or sodium gradient. F-type ATPases consist of two structural domains, F(1) containing the extramembraneous catalytic core and F(0) containing the membrane proton channel, linked together by a central stalk and a peripheral stalk. During catalysis, ATP synthesis in the catalytic domain of F(1) is coupled via a rotary mechanism of the central stalk subunits to proton translocation. Component of the F(0) channel, it forms part of the peripheral stalk, linking F(1) to F(0). The chain is ATP synthase subunit b from Synechocystis sp. (strain ATCC 27184 / PCC 6803 / Kazusa).